The chain runs to 345 residues: MLPCFQLLRIGGGRGGDLYTFHPPAGAGCTYRLGHRADLCDVALRPQQEPGLISGIHAELHAEPRGDDWRVSLEDHSLQGTLVNNVRLPRGHRLELSDGDLLTFGPEGPPGTSPSEFYFMFQQVRVKPQDFAAITIPRSRGETRAGAGFRPMLPSQGAPQRPLSTLSPAPKATLILNSIGSLSKLRPQPLTFSPSWGGPRSLPVPAPPGEVGNAPSAPPPRNRRKSVHRVLAELDDDSQPSESPPPVLMEPRKKLRVDKAPLTPTGNRRGRPRKYPVSAPMAPPAVGGGEPCAAPCCCLPQEETVAWVQCDGCDVWFHVACVGCSIQAAREADFRCPGCRAGIQT.

Positions 31-88 constitute an FHA domain; the sequence is YRLGHRADLCDVALRPQQEPGLISGIHAELHAEPRGDDWRVSLEDHSLQGTLVNNVRL. Disordered regions lie at residues 138-167 and 190-277; these read RSRG…STLS and LTFS…KYPV. The PHD-type zinc finger occupies 293 to 342; sequence AAPCCCLPQEETVAWVQCDGCDVWFHVACVGCSIQAAREADFRCPGCRAG. Cys-296, Cys-298, Cys-310, Cys-313, His-318, Cys-321, Cys-336, and Cys-339 together coordinate Zn(2+).

Its subcellular location is the nucleus. Potential transcription factor that may play a role in the regulation of genes involved in cell cycle G1/S transition. May bind to regulatory elements of genes, including the promoter of the transcription factor FOXO1. The sequence is that of Transcription factor 19 (TCF19) from Macaca mulatta (Rhesus macaque).